We begin with the raw amino-acid sequence, 512 residues long: 2-isopropylmalate synthase (512 aa).

Residues 5 to 268 (LIIFDTTLRD…DVGIDTQHIV (264 aa)) form the Pyruvate carboxyltransferase domain. Residues Asp14, His202, His204, and Asn239 each contribute to the Mn(2+) site. Residues 394 to 512 (GFVSLAQHSE…SKAERVAAQG (119 aa)) form a regulatory domain region.

This sequence belongs to the alpha-IPM synthase/homocitrate synthase family. LeuA type 1 subfamily. As to quaternary structure, homodimer. Requires Mn(2+) as cofactor.

The protein localises to the cytoplasm. It carries out the reaction 3-methyl-2-oxobutanoate + acetyl-CoA + H2O = (2S)-2-isopropylmalate + CoA + H(+). Its pathway is amino-acid biosynthesis; L-leucine biosynthesis; L-leucine from 3-methyl-2-oxobutanoate: step 1/4. Functionally, catalyzes the condensation of the acetyl group of acetyl-CoA with 3-methyl-2-oxobutanoate (2-ketoisovalerate) to form 3-carboxy-3-hydroxy-4-methylpentanoate (2-isopropylmalate). The sequence is that of 2-isopropylmalate synthase from Acidovorax ebreus (strain TPSY) (Diaphorobacter sp. (strain TPSY)).